The sequence spans 231 residues: Uracil phosphoribosyltransferase (231 aa).

Residue 38-42 coordinates GTP; that stretch reads KGLVR. Residues R87, R112, and 140–148 each bind 5-phospho-alpha-D-ribose 1-diphosphate; that span reads DPMIATGST. Uracil-binding positions include I203 and 208–210; that span reads GDA. D209 is a binding site for 5-phospho-alpha-D-ribose 1-diphosphate.

This sequence belongs to the UPRTase family. Mg(2+) is required as a cofactor.

It catalyses the reaction UMP + diphosphate = 5-phospho-alpha-D-ribose 1-diphosphate + uracil. Its pathway is pyrimidine metabolism; UMP biosynthesis via salvage pathway; UMP from uracil: step 1/1. Allosterically activated by GTP. Catalyzes the conversion of uracil and 5-phospho-alpha-D-ribose 1-diphosphate (PRPP) to UMP and diphosphate. In Methanococcus maripaludis (strain C7 / ATCC BAA-1331), this protein is Uracil phosphoribosyltransferase.